The chain runs to 506 residues: Maturase K (506 aa).

The protein belongs to the intron maturase 2 family. MatK subfamily.

The protein localises to the plastid. It is found in the chloroplast. Usually encoded in the trnK tRNA gene intron. Probably assists in splicing its own and other chloroplast group II introns. The polypeptide is Maturase K (Austrosteenisia blackii (Blood vine)).